We begin with the raw amino-acid sequence, 402 residues long: Diaminopimelate decarboxylase (402 aa).

The residue at position 45 (Lys45) is an N6-(pyridoxal phosphate)lysine. Pyridoxal 5'-phosphate contacts are provided by residues Gly224 and 259-262; that span reads EPGR. Substrate-binding residues include Arg262, Arg298, and Tyr302. The Proton donor role is filled by Cys327. Residues Glu328 and Tyr356 each coordinate substrate. Pyridoxal 5'-phosphate is bound at residue Tyr356.

It belongs to the Orn/Lys/Arg decarboxylase class-II family. LysA subfamily. In terms of assembly, homodimer. Pyridoxal 5'-phosphate is required as a cofactor.

It carries out the reaction meso-2,6-diaminopimelate + H(+) = L-lysine + CO2. It participates in amino-acid biosynthesis; L-lysine biosynthesis via DAP pathway; L-lysine from DL-2,6-diaminopimelate: step 1/1. Its function is as follows. Specifically catalyzes the decarboxylation of meso-diaminopimelate (meso-DAP) to L-lysine. The protein is Diaminopimelate decarboxylase of Campylobacter jejuni subsp. jejuni serotype O:2 (strain ATCC 700819 / NCTC 11168).